The chain runs to 281 residues: Transcription factor bHLH79 (281 aa).

Residues 47-167 are disordered; sequence FTRSEHSGNK…GQATDRHSLA (121 aa). Basic and acidic residues-rich tracts occupy residues 77–88 and 138–152; these read KTRDLNSEDDSS and TEQKNKPEPPKDYIH. Residues 159-209 form the bHLH domain; it reads QATDRHSLAERARREKISEKMTALQDIIPGCNKIIGKALVLDEIINYIQSL.

Homodimer.

The protein resides in the nucleus. The protein is Transcription factor bHLH79 (BHLH79) of Arabidopsis thaliana (Mouse-ear cress).